The primary structure comprises 97 residues: MPFKIFIITALIIVVLSMLAMLIRVILGPSLADRVVALDAIGLQLMAVIALFSILLNIKYMLVVILMVGILAFLGTAVFSKFMDEGKVIKHDSNDRH.

3 helical membrane-spanning segments follow: residues 3–23 (FKIF…AMLI), 35–55 (VVAL…FSIL), and 60–80 (YMLV…AVFS).

Belongs to the CPA3 antiporters (TC 2.A.63) subunit F family. As to quaternary structure, may form a heterooligomeric complex that consists of seven subunits: mnhA1, mnhB1, mnhC1, mnhD1, mnhE1, mnhF1 and mnhG1.

It localises to the cell membrane. Mnh complex is a Na(+)/H(+) antiporter involved in Na(+) excretion. The chain is Na(+)/H(+) antiporter subunit F1 (mnhF1) from Staphylococcus epidermidis (strain ATCC 35984 / DSM 28319 / BCRC 17069 / CCUG 31568 / BM 3577 / RP62A).